We begin with the raw amino-acid sequence, 127 residues long: MAIWQGKSMKKPSGGRAKMNRGKRKYELGREPAETKIGDRRVRLIRTRGGNTKVRLASDTRINVVDPETGKVEIAEIRNVVENTANPHFVRRNIITRGAVVETNLGNVRVTSRPGQDGVINGVLIRE.

Residues 1–33 (MAIWQGKSMKKPSGGRAKMNRGKRKYELGREPA) are disordered.

The protein belongs to the eukaryotic ribosomal protein eS8 family. Part of the 30S ribosomal subunit.

This is Small ribosomal subunit protein eS8 (rps8e) from Methanothermobacter thermautotrophicus (strain ATCC 29096 / DSM 1053 / JCM 10044 / NBRC 100330 / Delta H) (Methanobacterium thermoautotrophicum).